The chain runs to 99 residues: UPF0045 protein MTH_1187 (99 aa).

This sequence belongs to the UPF0045 family. Homotetramer.

The protein is UPF0045 protein MTH_1187 of Methanothermobacter thermautotrophicus (strain ATCC 29096 / DSM 1053 / JCM 10044 / NBRC 100330 / Delta H) (Methanobacterium thermoautotrophicum).